Here is a 682-residue protein sequence, read N- to C-terminus: Elongation factor G (682 aa).

Residues 8-282 (QKFRNFGIMA…AVVDYLPSPV (275 aa)) enclose the tr-type G domain. Residues 17 to 24 (AHIDAGKT), 81 to 85 (DTPGH), and 135 to 138 (NKMD) each bind GTP.

It belongs to the TRAFAC class translation factor GTPase superfamily. Classic translation factor GTPase family. EF-G/EF-2 subfamily.

It localises to the cytoplasm. Its function is as follows. Catalyzes the GTP-dependent ribosomal translocation step during translation elongation. During this step, the ribosome changes from the pre-translocational (PRE) to the post-translocational (POST) state as the newly formed A-site-bound peptidyl-tRNA and P-site-bound deacylated tRNA move to the P and E sites, respectively. Catalyzes the coordinated movement of the two tRNA molecules, the mRNA and conformational changes in the ribosome. This is Elongation factor G from Malacoplasma penetrans (strain HF-2) (Mycoplasma penetrans).